The following is a 335-amino-acid chain: 2,4-dienoyl-CoA reductase [(3E)-enoyl-CoA-producing], mitochondrial (335 aa).

A mitochondrion-targeting transit peptide spans M1 to Q34. K42 and K49 each carry N6-acetyllysine; alternate. N6-succinyllysine; alternate occurs at positions 42 and 49. G66–L71 provides a ligand contact to NADP(+). Residue T69 is modified to Phosphothreonine. K73 bears the N6-succinyllysine mark. R91 is a binding site for NADP(+). R91 contributes to the substrate binding site. K97 is subject to N6-acetyllysine; alternate. The residue at position 97 (K97) is an N6-succinyllysine; alternate. D117 serves as a coordination point for NADP(+). R119, F149, and S157 together coordinate substrate. The Proton acceptor role is filled by Y199. Residue K214 participates in NADP(+) binding. The residue at position 230 (K230) is an N6-acetyllysine. P240–I243 provides a ligand contact to NADP(+). Position 244 is an N6-acetyllysine; alternate (K244). N6-succinyllysine; alternate is present on K244. A substrate-binding site is contributed by R251. N6-acetyllysine; alternate occurs at positions 260 and 319. N6-succinyllysine; alternate occurs at positions 260 and 319.

Belongs to the short-chain dehydrogenases/reductases (SDR) family. 2,4-dienoyl-CoA reductase subfamily. As to quaternary structure, homotetramer. As to expression, heart = liver = pancreas &gt; kidney &gt;&gt; skeletal muscle = lung.

It is found in the mitochondrion. It carries out the reaction a (2E,4E)-dienoyl-CoA + NADPH + H(+) = a 4,5-saturated-(3E)-enoyl-CoA + NADP(+). The catalysed reaction is a (2E,4Z)-dienoyl-CoA + NADPH + H(+) = a 4,5-saturated-(3E)-enoyl-CoA + NADP(+). The enzyme catalyses (2E,4E)-hexadienoyl-CoA + NADPH + H(+) = (3E)-hexenoyl-CoA + NADP(+). In terms of biological role, auxiliary enzyme of beta-oxidation. It participates in the metabolism of unsaturated fatty enoyl-CoA esters having double bonds in both even- and odd-numbered positions in mitochondria. Catalyzes the NADP-dependent reduction of 2,4-dienoyl-CoA to yield trans-3-enoyl-CoA. This chain is 2,4-dienoyl-CoA reductase [(3E)-enoyl-CoA-producing], mitochondrial (DECR1), found in Homo sapiens (Human).